The chain runs to 135 residues: Interleukin-4 (135 aa).

An N-terminal signal peptide occupies residues 1-24; that stretch reads MGLTYQLIPVLVCLLVCTSHLVHG. 3 disulfide bridges follow: cysteine 27–cysteine 135, cysteine 48–cysteine 85, and cysteine 70–cysteine 105. Asparagine 62 is a glycosylation site (N-linked (GlcNAc...) asparagine).

It belongs to the IL-4/IL-13 family.

Its subcellular location is the secreted. Participates in at least several B-cell activation processes as well as of other cell types. It is a costimulator of DNA-synthesis. It induces the expression of class II MHC molecules on resting B-cells. It enhances both secretion and cell surface expression of IgE and IgG1. It also regulates the expression of the low affinity Fc receptor for IgE (CD23) on both lymphocytes and monocytes. Positively regulates IL31RA expression in macrophages. Stimulates autophagy in dendritic cells by interfering with mTORC1 signaling and through the induction of RUFY4. In Bubalus bubalis (Domestic water buffalo), this protein is Interleukin-4 (IL4).